A 612-amino-acid polypeptide reads, in one-letter code: Bile salt-activated lipase (612 aa).

An N-terminal signal peptide occupies residues 1–20 (MGRLEVLFLGLTCCLAAACA). An intrachain disulfide couples C84 to C100. N-linked (GlcNAc...) asparagine glycosylation is present at N207. S214 (acyl-ester intermediate) is an active-site residue. An intrachain disulfide couples C266 to C277. Catalysis depends on charge relay system residues D340 and H455. Residues 553-612 (VGDHTPPEDDSEAAPVPPTDDSQGGPVPPTDDSQTTPVPPTDNSQAGDSVEAQMPGPIGF) form a disordered region. Tandem repeats lie at residues 556-566 (HTPPEDDSEAA), 567-577 (PVPPTDDSQGG), 578-588 (PVPPTDDSQTT), and 589-599 (PVPPTDNSQAG). The tract at residues 556-599 (HTPPEDDSEAAPVPPTDDSQGGPVPPTDDSQTTPVPPTDNSQAG) is 4 X 11 AA tandem repeats, O-glycosylated region. The span at 583–599 (DDSQTTPVPPTDNSQAG) shows a compositional bias: polar residues.

Belongs to the type-B carboxylesterase/lipase family. As to quaternary structure, interacts with CLC. As to expression, synthesized primarily in the pancreas and then transported to the intestine.

It localises to the secreted. The catalysed reaction is a triacylglycerol + H2O = a diacylglycerol + a fatty acid + H(+). It carries out the reaction 1,2,3-tri-(9Z-octadecenoyl)-glycerol + H2O = di-(9Z)-octadecenoylglycerol + (9Z)-octadecenoate + H(+). The enzyme catalyses 1,2,3-trioctanoylglycerol + H2O = dioctanoylglycerol + octanoate + H(+). It catalyses the reaction a sterol ester + H2O = a sterol + a fatty acid + H(+). The catalysed reaction is cholesteryl (9Z-octadecenoate) + H2O = cholesterol + (9Z)-octadecenoate + H(+). It carries out the reaction an acetyl ester + H2O = an aliphatic alcohol + acetate + H(+). The enzyme catalyses a butanoate ester + H2O = an aliphatic alcohol + butanoate + H(+). It catalyses the reaction 9-hexadecanoyloxy-octadecanoate + H2O = 9-hydroxy-octadecanoate + hexadecanoate + H(+). The catalysed reaction is 9-(9Z-octadecenoyloxy)-octadecanoate + H2O = 9-hydroxy-octadecanoate + (9Z)-octadecenoate + H(+). It carries out the reaction 1-hexadecanoyl-sn-glycero-3-phosphocholine + H2O = sn-glycerol 3-phosphocholine + hexadecanoate + H(+). The enzyme catalyses 12-hexadecanoyloxy-octadecanoate + H2O = 12-hydroxyoctadecanoate + hexadecanoate + H(+). It catalyses the reaction 12-(9Z-octadecenoyloxy)-octadecanoate + H2O = 12-hydroxyoctadecanoate + (9Z)-octadecenoate + H(+). The catalysed reaction is 13-(9Z-octadecenoyloxy)-octadecanoate + H2O = 13-hydroxy-octadecanoate + (9Z)-octadecenoate + H(+). It carries out the reaction 9-(9Z-hexadecenoyloxy)-octadecanoate + H2O = (9Z)-hexadecenoate + 9-hydroxy-octadecanoate + H(+). The enzyme catalyses 12-(9Z-hexadecenoyloxy)-octadecanoate + H2O = 12-hydroxyoctadecanoate + (9Z)-hexadecenoate + H(+). It catalyses the reaction 13-(9Z-hexadecenoyloxy)-octadecanoate + H2O = 13-hydroxy-octadecanoate + (9Z)-hexadecenoate + H(+). The catalysed reaction is 12-octadecanoyloxy-octadecanoate + H2O = 12-hydroxyoctadecanoate + octadecanoate + H(+). It carries out the reaction 13-octadecanoyloxy-octadecanoate + H2O = 13-hydroxy-octadecanoate + octadecanoate + H(+). The enzyme catalyses 5-(9Z-hexadecenoyloxy)-octadecanoate + H2O = 5-hydroxy-octadecanoate + (9Z)-hexadecenoate + H(+). It catalyses the reaction 9-octadecanoyloxy-octadecanoate + H2O = 9-hydroxy-octadecanoate + octadecanoate + H(+). With respect to regulation, activated by bile salts such as sodium taurocholate. In terms of biological role, catalyzes the hydrolysis of a wide range of substrates including cholesteryl esters, phospholipids, lysophospholipids, di- and tri-acylglycerols, and fatty acid esters of hydroxy fatty acids (FAHFA). Preferentially hydrolyzes FAHFAs with the ester bond further away from the carboxylate. Unsaturated FAHFAs are hydrolyzed more quickly than saturated FAHFAs. Has an essential role in the complete digestion of dietary lipids and their intestinal absorption, along with the absorption of fat-soluble vitamins. The chain is Bile salt-activated lipase (Cel) from Rattus norvegicus (Rat).